The following is a 219-amino-acid chain: Deoxyribose-phosphate aldolase 1 (219 aa).

Asp-87 acts as the Proton donor/acceptor in catalysis. The active-site Schiff-base intermediate with acetaldehyde is the Lys-149. Residue Lys-178 is the Proton donor/acceptor of the active site.

Belongs to the DeoC/FbaB aldolase family. DeoC type 1 subfamily.

Its subcellular location is the cytoplasm. It carries out the reaction 2-deoxy-D-ribose 5-phosphate = D-glyceraldehyde 3-phosphate + acetaldehyde. The protein operates within carbohydrate degradation; 2-deoxy-D-ribose 1-phosphate degradation; D-glyceraldehyde 3-phosphate and acetaldehyde from 2-deoxy-alpha-D-ribose 1-phosphate: step 2/2. In terms of biological role, catalyzes a reversible aldol reaction between acetaldehyde and D-glyceraldehyde 3-phosphate to generate 2-deoxy-D-ribose 5-phosphate. This chain is Deoxyribose-phosphate aldolase 1, found in Vibrio vulnificus (strain YJ016).